Reading from the N-terminus, the 456-residue chain is Dolichyl-diphosphooligosaccharide--protein glycosyltransferase 48 kDa subunit (456 aa).

Positions Met1–Ala42 are cleaved as a signal peptide. Residues Ser43–Pro427 are Lumenal-facing. A helical membrane pass occupies residues Tyr428–Leu447. The Cytoplasmic portion of the chain corresponds to His448 to Asp456.

This sequence belongs to the DDOST 48 kDa subunit family. In terms of assembly, component of the oligosaccharyltransferase (OST) complex. OST exists in two different complex forms which contain common core subunits RPN1, RPN2, OST48, OST4, DAD1 and TMEM258, either STT3A or STT3B as catalytic subunits, and form-specific accessory subunits. STT3A complex assembly occurs through the formation of 3 subcomplexes. Subcomplex 1 contains RPN1 and TMEM258, subcomplex 2 contains the STT3A-specific subunits STT3A, DC2/OSTC, and KCP2 as well as the core subunit OST4, and subcomplex 3 contains RPN2, DAD1, and OST48. The STT3A complex can form stable complexes with the Sec61 complex or with both the Sec61 and TRAP complexes. Interacts with SMIM22.

The protein resides in the endoplasmic reticulum membrane. It participates in protein modification; protein glycosylation. Subunit of the oligosaccharyl transferase (OST) complex that catalyzes the initial transfer of a defined glycan (Glc(3)Man(9)GlcNAc(2) in eukaryotes) from the lipid carrier dolichol-pyrophosphate to an asparagine residue within an Asn-X-Ser/Thr consensus motif in nascent polypeptide chains, the first step in protein N-glycosylation. N-glycosylation occurs cotranslationally and the complex associates with the Sec61 complex at the channel-forming translocon complex that mediates protein translocation across the endoplasmic reticulum (ER). All subunits are required for a maximal enzyme activity. Required for the assembly of both SST3A- and SS3B-containing OST complexes. This chain is Dolichyl-diphosphooligosaccharide--protein glycosyltransferase 48 kDa subunit, found in Homo sapiens (Human).